A 285-amino-acid polypeptide reads, in one-letter code: Probable endonuclease 4 (285 aa).

Zn(2+) is bound by residues His69, His109, Glu145, Asp179, His182, His216, Asp229, His231, and Glu261.

The protein belongs to the AP endonuclease 2 family. Requires Zn(2+) as cofactor.

The enzyme catalyses Endonucleolytic cleavage to 5'-phosphooligonucleotide end-products.. In terms of biological role, endonuclease IV plays a role in DNA repair. It cleaves phosphodiester bonds at apurinic or apyrimidinic (AP) sites, generating a 3'-hydroxyl group and a 5'-terminal sugar phosphate. This Salmonella paratyphi C (strain RKS4594) protein is Probable endonuclease 4.